A 551-amino-acid polypeptide reads, in one-letter code: MAAKDVKFAGDARDRMLRGVDILANAVKVTLGPKGRNVLIERSFGAARITKDGVTVAKEIELEDKFENMGAQMLREVASKTNDLAGDGTTTATVLAQAIVREGAKSVAAGMNPMDLKRGIEIAVAAVIKDLVKRAKPVASSAEIAQVGTISSNGDAAIGKMIAQAMQKVGNEGVITVEENKSLTTEVDIVEGMKFDRGYLSPYFVTNAEKMAVEFDDAYVLLHEKKVSGLQSMLPLLEAVVQSGKPLVIIAEDVEGEALATLVVNRLRGGLKVAAVKAPGFGDRRKAMLEDLAILTGGQLISDDLGMKLENVTLKMLGRAKKLVIDKENTTIVGGAGKKADIETRVGQIKAQIEETTSDYDREKLQERLAKLAGGVAVIRVGGATEVEVKEKKDRVEDALNATRAAVQEGIVPGGGVALLRAKKAVGRISNDNPDVQAGINIVLKALEAPIRQIAENAGVEGSIVVGKILENKSETFGFDAQTEEYVDMLAKGIVDPAKVVRTALQDASSVAALLVTTECMVAEMPRDAAPAMPGGGGGMGGMGGMGGMGF.

ATP is bound by residues 30-33 (TLGP), Lys51, 87-91 (DGTTT), Gly415, and Asp496.

This sequence belongs to the chaperonin (HSP60) family. As to quaternary structure, forms a cylinder of 14 subunits composed of two heptameric rings stacked back-to-back. Interacts with the co-chaperonin GroES.

The protein resides in the cytoplasm. It catalyses the reaction ATP + H2O + a folded polypeptide = ADP + phosphate + an unfolded polypeptide.. Functionally, together with its co-chaperonin GroES, plays an essential role in assisting protein folding. The GroEL-GroES system forms a nano-cage that allows encapsulation of the non-native substrate proteins and provides a physical environment optimized to promote and accelerate protein folding. The protein is Chaperonin GroEL 2 of Rhodopseudomonas palustris (strain BisB18).